We begin with the raw amino-acid sequence, 555 residues long: CTP synthase (555 aa).

Residues 1–271 (MVKRGKKTKY…DDKLAELFNI (271 aa)) are amidoligase domain. CTP is bound at residue Ser-19. Ser-19 contributes to the UTP binding site. ATP is bound by residues 20-25 (SLGKGL) and Asp-77. Mg(2+) is bound by residues Asp-77 and Glu-145. Residues 152–154 (DIE), 192–197 (KTKPTQ), and Lys-228 contribute to the CTP site. Residues 192-197 (KTKPTQ) and Lys-228 contribute to the UTP site. One can recognise a Glutamine amidotransferase type-1 domain in the interval 297-538 (RVGVVGKYVE…VHAAREQRDQ (242 aa)). Gly-358 provides a ligand contact to L-glutamine. Cys-385 functions as the Nucleophile; for glutamine hydrolysis in the catalytic mechanism. Residues 386–389 (LGLQ), Glu-409, and Arg-466 each bind L-glutamine. Catalysis depends on residues His-511 and Glu-513.

This sequence belongs to the CTP synthase family. In terms of assembly, homotetramer.

The catalysed reaction is UTP + L-glutamine + ATP + H2O = CTP + L-glutamate + ADP + phosphate + 2 H(+). The enzyme catalyses L-glutamine + H2O = L-glutamate + NH4(+). It catalyses the reaction UTP + NH4(+) + ATP = CTP + ADP + phosphate + 2 H(+). Its pathway is pyrimidine metabolism; CTP biosynthesis via de novo pathway; CTP from UDP: step 2/2. Allosterically activated by GTP, when glutamine is the substrate; GTP has no effect on the reaction when ammonia is the substrate. The allosteric effector GTP functions by stabilizing the protein conformation that binds the tetrahedral intermediate(s) formed during glutamine hydrolysis. Inhibited by the product CTP, via allosteric rather than competitive inhibition. Catalyzes the ATP-dependent amination of UTP to CTP with either L-glutamine or ammonia as the source of nitrogen. Regulates intracellular CTP levels through interactions with the four ribonucleotide triphosphates. The protein is CTP synthase of Anaeromyxobacter sp. (strain Fw109-5).